The primary structure comprises 508 residues: Photosystem II CP47 reaction center protein (508 aa).

Helical transmembrane passes span 21-36 (AVHIMHTALVAGWAGS), 101-115 (IVFSGLCFLAAIWHW), 140-156 (GIHLFLAGLACFGFGAF), 203-218 (IAAGTLGILAGLFHLS), 237-252 (VLSSSIAAVFFAAFVV), and 457-472 (SFALLFFFGHIWHGSR).

This sequence belongs to the PsbB/PsbC family. PsbB subfamily. In terms of assembly, PSII is composed of 1 copy each of membrane proteins PsbA, PsbB, PsbC, PsbD, PsbE, PsbF, PsbH, PsbI, PsbJ, PsbK, PsbL, PsbM, PsbT, PsbX, PsbY, PsbZ, Psb30/Ycf12, at least 3 peripheral proteins of the oxygen-evolving complex and a large number of cofactors. It forms dimeric complexes. The cofactor is Binds multiple chlorophylls. PSII binds additional chlorophylls, carotenoids and specific lipids..

The protein localises to the plastid. Its subcellular location is the chloroplast thylakoid membrane. Its function is as follows. One of the components of the core complex of photosystem II (PSII). It binds chlorophyll and helps catalyze the primary light-induced photochemical processes of PSII. PSII is a light-driven water:plastoquinone oxidoreductase, using light energy to abstract electrons from H(2)O, generating O(2) and a proton gradient subsequently used for ATP formation. The polypeptide is Photosystem II CP47 reaction center protein (Lotus japonicus (Lotus corniculatus var. japonicus)).